Here is a 131-residue protein sequence, read N- to C-terminus: Protein Turandot M (131 aa).

A signal peptide spans 1-23; the sequence is MNPTVYLSCLVVFSLFYLGKAQA.

Belongs to the Turandot family.

The protein localises to the secreted. In terms of biological role, a humoral factor that may play a role in stress tolerance. Requires Mekk1 expression in the fat body to regulate response to septic injury and consequent immune response. This is Protein Turandot M from Drosophila yakuba (Fruit fly).